Consider the following 1121-residue polypeptide: tRNA (34-2'-O)-methyltransferase regulator WDR6 (1121 aa).

Met-1 is modified (N-acetylmethionine). 19 WD repeats span residues Ile-53–Ile-97, Arg-105–Pro-143, Cys-147–Pro-189, Ala-200–Val-238, Arg-247–His-285, Ile-289–Leu-327, Leu-335–Val-376, Trp-381–Ile-422, Pro-425–Ala-470, Ile-476–Ser-520, Pro-559–Asp-598, Val-604–Pro-642, His-645–Ala-684, Leu-739–Ile-785, His-848–Leu-893, Gln-901–Leu-946, Gly-970–Leu-1012, Glu-1036–Leu-1073, and Thr-1079–Asp-1121.

The protein belongs to the WD repeat WDR6 family. In terms of assembly, interacts with FTSJ1; the interaction is direct, and required for 2'-O-methylation of position 34 in substrate tRNAs. Interacts with IRS4. Interacts with STK11/LKB1.

The protein resides in the cytoplasm. Together with methyltransferase FTSJ1, methylates the 2'-O-ribose of nucleotides at position 34 of the tRNA anticodon loop of substrate tRNAs. Required for the correct positioning of the substrate tRNA for methylation. Required to suppress amino acid starvation-induced autophagy. Enhances the STK11/LKB1-induced cell growth suppression activity. This is tRNA (34-2'-O)-methyltransferase regulator WDR6 (WDR6) from Pongo abelii (Sumatran orangutan).